Here is a 100-residue protein sequence, read N- to C-terminus: Small ribosomal subunit protein uS14c (100 aa).

Belongs to the universal ribosomal protein uS14 family. In terms of assembly, part of the 30S ribosomal subunit.

The protein resides in the plastid. The protein localises to the chloroplast. Binds 16S rRNA, required for the assembly of 30S particles. In Trieres chinensis (Marine centric diatom), this protein is Small ribosomal subunit protein uS14c.